Consider the following 177-residue polypeptide: 18.9 kDa heat shock protein (177 aa).

Residues 1–35 (MSMITSMLGRKQNAQQKGGGGGGRTGGGGGGEIEP) form a disordered region. A compositionally biased stretch (gly residues) spans 17-32 (KGGGGGGRTGGGGGGE). Positions 63–177 (AAGVPSTASM…PHARIIPITN (115 aa)) constitute a sHSP domain.

This sequence belongs to the small heat shock protein (HSP20) family. In terms of assembly, may form oligomeric structures.

The protein localises to the cytoplasm. In Oryza sativa subsp. japonica (Rice), this protein is 18.9 kDa heat shock protein (HSP18.9).